The following is a 338-amino-acid chain: MAEAFTTVPAKSSPARFRYTKANPVKDPTTSFAGKTILITGPNAGLGFEAATKFARLGASKLIFGVRSLERGQEAKTKIEQLTKCKRDAIQLVQLDMGSYASIEKFAKSVTDEFPVIHAAVLNAGVAPPSYKLSQEGWEMSLQVNVISTAYLAILLLPKLRESGRAIGEPAYLEFVSSTGHGDVTTESVRDGKSILKKVNDPANFKFTAQYQITKLLEIWAMEHIAAKTSPKEVIVNSACPGLCKSSIGRDFGIVLRGLDAVFKGIFAQTAEAGSRILVSAVTAGTDSHGGFWALDAVSVPGELVTSDEGKALSKQFWAEVLDVLRKQNADVEAILNG.

Residues Leu-46, Arg-71, Asp-96, and Asn-123 each contribute to the NADP(+) site. Catalysis depends on Ser-177, which acts as the Proton donor. Residues Tyr-211 and Lys-215 each contribute to the NADP(+) site. Tyr-211 functions as the Proton acceptor in the catalytic mechanism. Catalysis depends on Lys-215, which acts as the Lowers pKa of active site Tyr.

Belongs to the short-chain dehydrogenases/reductases (SDR) family.

It participates in mycotoxin biosynthesis. In terms of biological role, short-chain dehydrogenase/reductase; part of the gene cluster that mediates the biosynthesis of the mycotoxins phomacins, leucine-derived cytochalasans with potent actin polymerization-inhibitory activities and monocot-specific antigerminative activities. The first step in the pathway is catalyzed by the hybrid PKS-NRPS phmA, assisted by the enoyl reductase phmE, that are responsible for fusion of the leucine precursor and the polyketide backbone to produce a 2-pyrrolidone intermediate. The polyketide synthase module (PKS) of phmA is responsible for the synthesis of the polyketide backbone and the downstream nonribosomal peptide synthetase (NRPS) amidates the carboxyl end of the polyketide with the leucine precursor. Because phmA lacks a designated enoylreductase (ER) domain, the required activity is provided the enoyl reductase phmE. Reduction by the hydrolyase phmG, followed by dehydration and intra-molecular Diels-Alder cyclization by the Diels-Alderase phmD then yield the required isoindolone-fused macrocycle. A number of oxidative steps catalyzed by the tailoring cytochrome P450 monooxygenase phmB, the FAD-linked oxidoreductase phmC and the short-chain dehydrogenase/reductase phmF, are further required to afford the final products, phomacin D and phomacin E. This is Short-chain dehydrogenase/reductase phmF from Phaeosphaeria nodorum (strain SN15 / ATCC MYA-4574 / FGSC 10173) (Glume blotch fungus).